An 81-amino-acid polypeptide reads, in one-letter code: Photosystem I iron-sulfur center (81 aa).

4Fe-4S ferredoxin-type domains are found at residues serine 2–tryptophan 31 and isoleucine 39–tyrosine 68. 8 residues coordinate [4Fe-4S] cluster: cysteine 11, cysteine 14, cysteine 17, cysteine 21, cysteine 48, cysteine 51, cysteine 54, and cysteine 58.

In terms of assembly, the eukaryotic PSI reaction center is composed of at least 11 subunits. It depends on [4Fe-4S] cluster as a cofactor.

The protein resides in the plastid. It localises to the chloroplast thylakoid membrane. The enzyme catalyses reduced [plastocyanin] + hnu + oxidized [2Fe-2S]-[ferredoxin] = oxidized [plastocyanin] + reduced [2Fe-2S]-[ferredoxin]. Its function is as follows. Apoprotein for the two 4Fe-4S centers FA and FB of photosystem I (PSI); essential for photochemical activity. FB is the terminal electron acceptor of PSI, donating electrons to ferredoxin. The C-terminus interacts with PsaA/B/D and helps assemble the protein into the PSI complex. Required for binding of PsaD and PsaE to PSI. PSI is a plastocyanin/cytochrome c6-ferredoxin oxidoreductase, converting photonic excitation into a charge separation, which transfers an electron from the donor P700 chlorophyll pair to the spectroscopically characterized acceptors A0, A1, FX, FA and FB in turn. The protein is Photosystem I iron-sulfur center of Ostreococcus tauri.